Consider the following 218-residue polypeptide: Recombination protein RecR (218 aa).

The C4-type zinc finger occupies 56-71 (CRICCNISRDEVCRIC). Residues 79 to 195 (GLICVVEEPK…VVSRLASGMP (117 aa)) form the Toprim domain.

Belongs to the RecR family.

Functionally, may play a role in DNA repair. It seems to be involved in an RecBC-independent recombinational process of DNA repair. It may act with RecF and RecO. The sequence is that of Recombination protein RecR from Corynebacterium efficiens (strain DSM 44549 / YS-314 / AJ 12310 / JCM 11189 / NBRC 100395).